The following is a 224-amino-acid chain: UPF0758 protein Mmwyl1_0624 (224 aa).

In terms of domain architecture, MPN spans 102 to 224 (VFASAEHVRT…PVSLAERGLV (123 aa)). 3 residues coordinate Zn(2+): histidine 173, histidine 175, and aspartate 186. Residues 173 to 186 (HNHPSGIAEPSQAD) carry the JAMM motif motif.

This sequence belongs to the UPF0758 family.

In Marinomonas sp. (strain MWYL1), this protein is UPF0758 protein Mmwyl1_0624.